We begin with the raw amino-acid sequence, 101 residues long: Urease subunit beta (101 aa).

This sequence belongs to the urease beta subunit family. Heterotrimer of UreA (gamma), UreB (beta) and UreC (alpha) subunits. Three heterotrimers associate to form the active enzyme.

Its subcellular location is the cytoplasm. It carries out the reaction urea + 2 H2O + H(+) = hydrogencarbonate + 2 NH4(+). The protein operates within nitrogen metabolism; urea degradation; CO(2) and NH(3) from urea (urease route): step 1/1. In Agrobacterium fabrum (strain C58 / ATCC 33970) (Agrobacterium tumefaciens (strain C58)), this protein is Urease subunit beta.